The primary structure comprises 823 residues: Protein Jade-3 (823 aa).

Residues 1–32 (MKRHRPVSSSDSSDESPSTSFTSGSMYRIKSK) are disordered. The segment covering 8–25 (SSSDSSDESPSTSFTSGS) has biased composition (low complexity). Residues Lys30 and Lys32 each carry the N6-acetyllysine modification. Ser85 is modified (phosphoserine). A PHD-type 1 zinc finger spans residues 200–250 (DVICDVCRSPDSEEGNDMVFCDKCNVCVHQACYGILKVPEGSWLCRSCVLG). The C2HC pre-PHD-type zinc-finger motif lies at 252–286 (YPQCVLCPKKGGALKTTKTGTKWAHVSCALWIPEV). The PHD-type 2 zinc-finger motif lies at 310 to 366 (LVCNLCKLKTGACIQCSIKSCITAFHVTCAFEHGLEMKTILDEGDEVKFKSYCLKHS). Disordered regions lie at residues 372–395 (LGEA…KTSL) and 542–576 (KLKM…VHSI). Low complexity predominate over residues 561–575 (DQQPHSPDSSSSVHS). A Phosphoserine modification is found at Ser566. Position 601 is an N6-acetyllysine (Lys601). A Phosphoserine modification is found at Ser608. Residues 609-630 (LSHSRSEAKESSPAWRTPSSEC) are disordered. At Lys638 the chain carries N6-acetyllysine. Composition is skewed to polar residues over residues 650 to 664 (SSIG…SKFA) and 673 to 684 (WSGNVTQKDSSS). A disordered region spans residues 650–684 (SSIGNGKSQPNSKFAKSNGLEGSWSGNVTQKDSSS). Position 735 is an N6-acetyllysine (Lys735). The disordered stretch occupies residues 758–823 (RAPYQENDGY…HPLSHSSMQR (66 aa)). Ser774, Ser776, and Ser780 each carry phosphoserine. Over residues 781–809 (DGNKEKVRVRKDSSDRENPPHDSRRDCHG) the composition is skewed to basic and acidic residues.

It belongs to the JADE family. In terms of assembly, component of the HBO1 complex composed at least of ING4 or ING5, KAT7/HBO1, MEAF6, and one of JADE1, JADE2 and JADE3. As to expression, ubiquitously expressed, with highest levels in placenta and uterus.

In terms of biological role, scaffold subunit of some HBO1 complexes, which have a histone H4 acetyltransferase activity. The chain is Protein Jade-3 (JADE3) from Homo sapiens (Human).